The chain runs to 154 residues: Transcriptional repressor NrdR (154 aa).

The segment at 3–34 (CPFCGNVDTQVKDSRPAEDNVAIRRRRFCPAC) is a zinc-finger region. One can recognise an ATP-cone domain in the interval 49–139 (LVVVKSSGRR…VYKNFQAADD (91 aa)).

This sequence belongs to the NrdR family. The cofactor is Zn(2+).

Its function is as follows. Negatively regulates transcription of bacterial ribonucleotide reductase nrd genes and operons by binding to NrdR-boxes. The sequence is that of Transcriptional repressor NrdR from Paracoccus denitrificans (strain Pd 1222).